The following is a 243-amino-acid chain: Triosephosphate isomerase (243 aa).

9 to 11 (NWK) is a substrate binding site. The active-site Electrophile is His-96. Glu-165 functions as the Proton acceptor in the catalytic mechanism. Substrate is bound by residues Gly-171, Ser-204, and 225–226 (GG).

The protein belongs to the triosephosphate isomerase family. In terms of assembly, homodimer.

The protein resides in the cytoplasm. It carries out the reaction D-glyceraldehyde 3-phosphate = dihydroxyacetone phosphate. The protein operates within carbohydrate biosynthesis; gluconeogenesis. Its pathway is carbohydrate degradation; glycolysis; D-glyceraldehyde 3-phosphate from glycerone phosphate: step 1/1. In terms of biological role, involved in the gluconeogenesis. Catalyzes stereospecifically the conversion of dihydroxyacetone phosphate (DHAP) to D-glyceraldehyde-3-phosphate (G3P). This Synechococcus sp. (strain CC9311) protein is Triosephosphate isomerase.